Consider the following 483-residue polypeptide: Glutamyl-tRNA(Gln) amidotransferase subunit A (483 aa).

Active-site charge relay system residues include Lys-76 and Ser-151. The active-site Acyl-ester intermediate is the Ser-175.

It belongs to the amidase family. GatA subfamily. Heterotrimer of A, B and C subunits.

The enzyme catalyses L-glutamyl-tRNA(Gln) + L-glutamine + ATP + H2O = L-glutaminyl-tRNA(Gln) + L-glutamate + ADP + phosphate + H(+). Its function is as follows. Allows the formation of correctly charged Gln-tRNA(Gln) through the transamidation of misacylated Glu-tRNA(Gln) in organisms which lack glutaminyl-tRNA synthetase. The reaction takes place in the presence of glutamine and ATP through an activated gamma-phospho-Glu-tRNA(Gln). This Pseudomonas putida (strain ATCC 47054 / DSM 6125 / CFBP 8728 / NCIMB 11950 / KT2440) protein is Glutamyl-tRNA(Gln) amidotransferase subunit A.